Consider the following 98-residue polypeptide: uncharacterized protein (98 aa).

The span at 19–31 shows a compositional bias: basic residues; sequence RRMSKRSKNKAKK. Residues 19-47 form a disordered region; it reads RRMSKRSKNKAKKERVPVEDRPPTPMPTS.

This sequence belongs to the lymphocryptovirus BNLF2B family.

This is an uncharacterized protein from Epstein-Barr virus (strain AG876) (HHV-4).